Reading from the N-terminus, the 384-residue chain is Probable L-aspartate decarboxylase (384 aa).

K233 carries the N6-(pyridoxal phosphate)lysine modification.

Belongs to the group II decarboxylase family. MfnA subfamily. Requires pyridoxal 5'-phosphate as cofactor.

It catalyses the reaction L-aspartate + H(+) = beta-alanine + CO2. It functions in the pathway cofactor biosynthesis; coenzyme A biosynthesis. In terms of biological role, catalyzes the decarboxylation of L-aspartate to produce beta-alanine. The sequence is that of Probable L-aspartate decarboxylase from Pyrococcus abyssi (strain GE5 / Orsay).